Here is a 325-residue protein sequence, read N- to C-terminus: UPF0285 protein MA_3856 (325 aa).

Belongs to the UPF0285 family.

The protein is UPF0285 protein MA_3856 of Methanosarcina acetivorans (strain ATCC 35395 / DSM 2834 / JCM 12185 / C2A).